Reading from the N-terminus, the 256-residue chain is Small ribosomal subunit protein uS2 (256 aa).

It belongs to the universal ribosomal protein uS2 family.

This is Small ribosomal subunit protein uS2 from Rhizobium rhizogenes (strain K84 / ATCC BAA-868) (Agrobacterium radiobacter).